Reading from the N-terminus, the 186-residue chain is Probable RNA 2'-phosphotransferase (186 aa).

This sequence belongs to the KptA/TPT1 family.

Functionally, removes the 2'-phosphate from RNA via an intermediate in which the phosphate is ADP-ribosylated by NAD followed by a presumed transesterification to release the RNA and generate ADP-ribose 1''-2''-cyclic phosphate (APPR&gt;P). May function as an ADP-ribosylase. The chain is Probable RNA 2'-phosphotransferase from Hahella chejuensis (strain KCTC 2396).